The primary structure comprises 432 residues: Enolase (432 aa).

Residue Gln164 participates in (2R)-2-phosphoglycerate binding. Glu206 acts as the Proton donor in catalysis. 3 residues coordinate Mg(2+): Asp243, Glu284, and Asp311. Residues Lys336, Arg365, Ser366, and Lys387 each contribute to the (2R)-2-phosphoglycerate site. Lys336 (proton acceptor) is an active-site residue.

The protein belongs to the enolase family. The cofactor is Mg(2+).

The protein resides in the cytoplasm. It localises to the secreted. It is found in the cell surface. It carries out the reaction (2R)-2-phosphoglycerate = phosphoenolpyruvate + H2O. It participates in carbohydrate degradation; glycolysis; pyruvate from D-glyceraldehyde 3-phosphate: step 4/5. Catalyzes the reversible conversion of 2-phosphoglycerate (2-PG) into phosphoenolpyruvate (PEP). It is essential for the degradation of carbohydrates via glycolysis. The protein is Enolase of Synechococcus sp. (strain JA-3-3Ab) (Cyanobacteria bacterium Yellowstone A-Prime).